The sequence spans 409 residues: N-acetylglucosamine-6-phosphate deacetylase (409 aa).

Residue glutamate 143 coordinates a divalent metal cation. 154–155 (AH) provides a ligand contact to substrate. Residues histidine 211 and histidine 232 each contribute to the a divalent metal cation site. Substrate contacts are provided by residues 235–236 (NA), arginine 243, and 269–272 (DGTH). The active-site Proton donor/acceptor is the aspartate 294. Position 328 to 330 (328 to 330 (LSG)) interacts with substrate.

The protein belongs to the metallo-dependent hydrolases superfamily. NagA family. The cofactor is a divalent metal cation.

It catalyses the reaction N-acetyl-D-glucosamine 6-phosphate + H2O = D-glucosamine 6-phosphate + acetate. Its pathway is amino-sugar metabolism; N-acetylneuraminate degradation. In terms of biological role, hydrolyzes the N-glycolyl group from N-glycolylglucosamine 6-phosphate (GlcNGc-6-P) in the N-glycolylneuraminic acid (Neu5Gc) degradation pathway. Although human is not able to catalyze formation of Neu5Gc due to the inactive CMAHP enzyme, Neu5Gc is present in food and must be degraded. In Homo sapiens (Human), this protein is N-acetylglucosamine-6-phosphate deacetylase (AMDHD2).